The chain runs to 159 residues: Insertion element IS136 uncharacterized 16.9 kDa protein (159 aa).

Residues 126–142 (RSFVSPSSSTPSTARSS) show a composition bias toward low complexity. The tract at residues 126–159 (RSFVSPSSSTPSTARSSPGRPLPMQAFPAQTCAT) is disordered.

This is Insertion element IS136 uncharacterized 16.9 kDa protein from Agrobacterium tumefaciens (strain T37).